The following is a 337-amino-acid chain: Perakine reductase (337 aa).

Tyr57 (proton donor) is an active-site residue. His126 is a binding site for substrate. 205 to 214 (SPIGRGLFAG) is a binding site for NADP(+).

This sequence belongs to the aldo/keto reductase family.

The catalysed reaction is raucaffrinoline + NADP(+) = perakine + NADPH + H(+). Functionally, aldo-keto reductase involved in the biosynthesis of monoterpenoid indole alkaloids. Broad substrate specificity enzyme with a high selectivity in the group of alkaloids. Can use perakine, 19(S),20(R)-dihydro-peraksine-17,21-al, cinnamic aldehyde, p-coumaric aldehyde and 3-(3,4,5-trimethoxyphenyl)propanal as substrates, but not ketosteroids such as progesterone. NADPH could not be replaced by NADH. In Rauvolfia serpentina (Serpentine wood), this protein is Perakine reductase (PR).